We begin with the raw amino-acid sequence, 99 residues long: Beta-defensin 127 (99 aa).

The signal sequence occupies residues 1–20 (MGLFMIIAILLFQKPTVTEQ). 3 disulfide bridges follow: Cys24–Cys53, Cys33–Cys47, and Cys37–Cys54. A propeptide spanning residues 66–99 (ITKPSHPKPATLALTLQDYVTIIENFPSLKTQST) is cleaved from the precursor.

This sequence belongs to the beta-defensin family.

It is found in the secreted. Functionally, has antibacterial activity. This Pan troglodytes (Chimpanzee) protein is Beta-defensin 127 (DEFB127).